A 269-amino-acid chain; its full sequence is 3-methyl-2-oxobutanoate hydroxymethyltransferase (269 aa).

Aspartate 50 and aspartate 89 together coordinate Mg(2+). 3-methyl-2-oxobutanoate-binding positions include 50 to 51 (DS), aspartate 89, and lysine 118. Glutamate 120 lines the Mg(2+) pocket. Residue glutamate 187 is the Proton acceptor of the active site.

It belongs to the PanB family. As to quaternary structure, homodecamer; pentamer of dimers. It depends on Mg(2+) as a cofactor.

It is found in the cytoplasm. It catalyses the reaction 3-methyl-2-oxobutanoate + (6R)-5,10-methylene-5,6,7,8-tetrahydrofolate + H2O = 2-dehydropantoate + (6S)-5,6,7,8-tetrahydrofolate. It participates in cofactor biosynthesis; (R)-pantothenate biosynthesis; (R)-pantoate from 3-methyl-2-oxobutanoate: step 1/2. Functionally, catalyzes the reversible reaction in which hydroxymethyl group from 5,10-methylenetetrahydrofolate is transferred onto alpha-ketoisovalerate to form ketopantoate. This Aliarcobacter butzleri (strain RM4018) (Arcobacter butzleri) protein is 3-methyl-2-oxobutanoate hydroxymethyltransferase.